The chain runs to 523 residues: GMP synthase [glutamine-hydrolyzing] (523 aa).

The region spanning 8 to 205 (RILILDFGSQ…IRELCECEAL (198 aa)) is the Glutamine amidotransferase type-1 domain. Cys85 serves as the catalytic Nucleophile. Catalysis depends on residues His179 and Glu181. The GMPS ATP-PPase domain maps to 206–398 (WTPSNIISDA…LGLPYDMVYR (193 aa)). ATP is bound at residue 233–239 (SGGVDSS).

In terms of assembly, homodimer.

The enzyme catalyses XMP + L-glutamine + ATP + H2O = GMP + L-glutamate + AMP + diphosphate + 2 H(+). Its pathway is purine metabolism; GMP biosynthesis; GMP from XMP (L-Gln route): step 1/1. Catalyzes the synthesis of GMP from XMP. The protein is GMP synthase [glutamine-hydrolyzing] of Alcanivorax borkumensis (strain ATCC 700651 / DSM 11573 / NCIMB 13689 / SK2).